Reading from the N-terminus, the 588-residue chain is Phosphomethylpyrimidine synthase (588 aa).

Substrate contacts are provided by residues asparagine 212, methionine 241, tyrosine 270, histidine 306, 326 to 328, 367 to 370, and glutamate 406; these read SRG and DGLR. Histidine 410 lines the Zn(2+) pocket. Tyrosine 433 is a binding site for substrate. Residue histidine 474 coordinates Zn(2+). Residues cysteine 554, cysteine 557, and cysteine 562 each coordinate [4Fe-4S] cluster.

The protein belongs to the ThiC family. Homodimer. Requires [4Fe-4S] cluster as cofactor.

The catalysed reaction is 5-amino-1-(5-phospho-beta-D-ribosyl)imidazole + S-adenosyl-L-methionine = 4-amino-2-methyl-5-(phosphooxymethyl)pyrimidine + CO + 5'-deoxyadenosine + formate + L-methionine + 3 H(+). The protein operates within cofactor biosynthesis; thiamine diphosphate biosynthesis. Functionally, catalyzes the synthesis of the hydroxymethylpyrimidine phosphate (HMP-P) moiety of thiamine from aminoimidazole ribotide (AIR) in a radical S-adenosyl-L-methionine (SAM)-dependent reaction. This is Phosphomethylpyrimidine synthase from Bartonella quintana (strain Toulouse) (Rochalimaea quintana).